A 93-amino-acid chain; its full sequence is Co-chaperonin GroES (93 aa).

The protein belongs to the GroES chaperonin family. As to quaternary structure, heptamer of 7 subunits arranged in a ring. Interacts with the chaperonin GroEL.

The protein resides in the cytoplasm. Functionally, together with the chaperonin GroEL, plays an essential role in assisting protein folding. The GroEL-GroES system forms a nano-cage that allows encapsulation of the non-native substrate proteins and provides a physical environment optimized to promote and accelerate protein folding. GroES binds to the apical surface of the GroEL ring, thereby capping the opening of the GroEL channel. The polypeptide is Co-chaperonin GroES (Streptococcus constellatus).